A 664-amino-acid polypeptide reads, in one-letter code: Glycine--tRNA ligase beta subunit (664 aa).

The protein belongs to the class-II aminoacyl-tRNA synthetase family. As to quaternary structure, tetramer of two alpha and two beta subunits.

The protein resides in the cytoplasm. The enzyme catalyses tRNA(Gly) + glycine + ATP = glycyl-tRNA(Gly) + AMP + diphosphate. The chain is Glycine--tRNA ligase beta subunit from Rickettsia africae (strain ESF-5).